A 448-amino-acid chain; its full sequence is Homogentisate 1,2-dioxygenase (448 aa).

H303 acts as the Proton acceptor in catalysis. Fe cation is bound by residues H346 and E352. Homogentisate is bound by residues Y361 and H382. H382 is a binding site for Fe cation.

This sequence belongs to the homogentisate dioxygenase family. In terms of assembly, hexamer; dimer of trimers. It depends on Fe cation as a cofactor.

The enzyme catalyses homogentisate + O2 = 4-maleylacetoacetate + H(+). It participates in amino-acid degradation; L-phenylalanine degradation; acetoacetate and fumarate from L-phenylalanine: step 4/6. Functionally, involved in the catabolism of homogentisate (2,5-dihydroxyphenylacetate or 2,5-OH-PhAc), a central intermediate in the degradation of phenylalanine and tyrosine. Catalyzes the oxidative ring cleavage of the aromatic ring of homogentisate to yield maleylacetoacetate. This Rhodopseudomonas palustris (strain TIE-1) protein is Homogentisate 1,2-dioxygenase.